Consider the following 1561-residue polypeptide: Sterile alpha motif domain-containing protein 9-like (1561 aa).

One can recognise an SAM domain in the interval 14–79; it reads WTKEHVRKWV…RMYNKLISSP (66 aa). A disordered region spans residues 78-157; that stretch reads SPESHNQDSR…DNKPKPEQMS (80 aa). Basic and acidic residues-rich tracts occupy residues 82-107 and 142-153; these read HNQD…KNEE and VTKDMEDNKPKP.

As to quaternary structure, interacts with EEA1.

Its subcellular location is the early endosome. The protein resides in the mitochondrion. Functionally, may be involved in endosome fusion. Mediates down-regulation of growth factor signaling via internalization of growth factor receptors. The chain is Sterile alpha motif domain-containing protein 9-like (Samd9l) from Mus musculus (Mouse).